Reading from the N-terminus, the 664-residue chain is MRNLGIAVTFAVLLVIGYVTALEWDAVVTTDSGILFFDKNWTQISSGGHQFHHISAFAYDEVKRKLYFSDLKDPSFRIFSLDTKPEEEYHKVAKLLPKSDQTGYITGLAFDHLERKLYWTEKGTHSVYSVEVDKLGAPANATDGLINLVAQVEENHDLAALTIDECRRHLYWTNSYLQTSSIVRAAMNGTVLDDHKEDVYEPRGISVDHYNNRIYWVEKKYGRAFTVESANLEVQDRQTFLRGEDKIPTHVSPNSQYLYWIDQEDGEVHETMKSDSKVTRVVYKGSRPSALIIRSGLLVEYQKNNPSCKAVVSEIIDNVRKESSEVKDVAQAVTSKPEMITCLNKGILNHNTNSCICLPEYQGTFCEIPICNNFCVHGECVVGADSRPMCKCHAEFEGERCDRNICDGYCLNNGRCALSATGQRSCTCSKNFSGARCETAICTSDYCYNGECFVENEVPECKCNVGYRGDRCEEYTCNNYCLHDGTCILNNDTMLVECRCGSEYTGKRCEIPKRFCSLDNGNPEMQQYCEGVAIAKNLVEPQVTYCKNSFNRTVVYVSLAFTASLVTLVTILCTVRRMYERNRPRITKRFKVTNNTQMTSRPATQCEITIENCCNMNVCETPCFDTKILQKSATKAEDKQFLLDDIESIAGSYRKLPSCVAEKN.

The signal sequence occupies residues 1–21; the sequence is MRNLGIAVTFAVLLVIGYVTA. At 22 to 552 the chain is on the extracellular side; the sequence is LEWDAVVTTD…VTYCKNSFNR (531 aa). N-linked (GlcNAc...) asparagine glycans are attached at residues asparagine 40, asparagine 140, and asparagine 188. LDL-receptor class B repeat units follow at residues 115 to 157, 168 to 211, and 212 to 257; these read RKLY…ENHD, RHLY…DHYN, and NRIY…NSQY. EGF-like domains are found at residues 367-399, 402-438, and 473-510; these read EIPI…FEGE, DRNI…ARCE, and EEYT…KRCE. Cystine bridges form between cysteine 371/cysteine 380, cysteine 375/cysteine 390, cysteine 406/cysteine 416, cysteine 410/cysteine 426, cysteine 428/cysteine 437, cysteine 477/cysteine 487, cysteine 481/cysteine 498, and cysteine 500/cysteine 509. Asparagine 431 carries an N-linked (GlcNAc...) asparagine glycan. N-linked (GlcNAc...) asparagine glycosylation is present at asparagine 491. Asparagine 551 is a glycosylation site (N-linked (GlcNAc...) asparagine). The chain crosses the membrane as a helical span at residues 553–573; the sequence is TVVYVSLAFTASLVTLVTILC. Residues 574 to 664 are Cytoplasmic-facing; the sequence is TVRRMYERNR…KLPSCVAEKN (91 aa).

The protein belongs to the cueball family.

It is found in the cell membrane. Its function is as follows. Has a role in spermatogenesis and oogenesis. The chain is Protein cueball from Aedes aegypti (Yellowfever mosquito).